The following is a 668-amino-acid chain: Ecdysone oxidase (668 aa).

Residues 137-140 (NHMV), valine 270, and 536-537 (WH) each bind FAD. The active-site Proton acceptor is the histidine 537.

The protein belongs to the GMC oxidoreductase family. FAD serves as cofactor.

It catalyses the reaction ecdysone + O2 = 3-dehydroecdysone + H2O2. In terms of biological role, involved in the inactivation of ecdysteroid molting hormones by converting ecdysteroids into 3-dehydroecdysteroids. This Bombyx mori (Silk moth) protein is Ecdysone oxidase.